Consider the following 260-residue polypeptide: Phosphatidate cytidylyltransferase (260 aa).

7 helical membrane-spanning segments follow: residues 9–29, 46–66, 70–90, 102–122, 130–150, 172–192, and 196–216; these read IIALLIFLPILLMGGTTLMLF, MIKLISVPGIFSALALIIIML, AGDWVSNIQLKSLIAMSFILL, FMDAAFCLMSVAYVGIGFMYF, LHYILYAFLVVWLTDTGAYIF, FIGGLICSLIVPIVMLFFVDF, and IWLLLLVTIILSIFGQLGDLV.

The protein belongs to the CDS family.

It localises to the cell membrane. The enzyme catalyses a 1,2-diacyl-sn-glycero-3-phosphate + CTP + H(+) = a CDP-1,2-diacyl-sn-glycerol + diphosphate. Its pathway is phospholipid metabolism; CDP-diacylglycerol biosynthesis; CDP-diacylglycerol from sn-glycerol 3-phosphate: step 3/3. The sequence is that of Phosphatidate cytidylyltransferase (cdsA) from Staphylococcus haemolyticus (strain JCSC1435).